The chain runs to 66 residues: Large ribosomal subunit protein bL31 (66 aa).

Zn(2+) is bound by residues Cys-16, Cys-18, Cys-36, and Cys-39.

The protein belongs to the bacterial ribosomal protein bL31 family. Type A subfamily. As to quaternary structure, part of the 50S ribosomal subunit. Zn(2+) serves as cofactor.

In terms of biological role, binds the 23S rRNA. The protein is Large ribosomal subunit protein bL31 of Campylobacter curvus (strain 525.92).